Consider the following 141-residue polypeptide: MTVQSINHLLFSVSDLEKSIAFYENVFGAKLLVKGNSTAYFDVNGLWLALNVEKDIPRNDIQYSYTHIAFTISEDEFDKMYDKLVQLKVLILDGRQRDERDKKSIYFTDPDGHKFEFHTGTLQDRLDYYKKEKLHMEFFNH.

The VOC domain occupies 5 to 120 (SINHLLFSVS…DGHKFEFHTG (116 aa)). 3 residues coordinate Mg(2+): H8, H67, and E116. E116 serves as the catalytic Proton donor/acceptor.

This sequence belongs to the fosfomycin resistance protein family. FosB subfamily. As to quaternary structure, homodimer. Mg(2+) serves as cofactor.

The protein localises to the cytoplasm. Metallothiol transferase which confers resistance to fosfomycin by catalyzing the addition of a thiol cofactor to fosfomycin. L-cysteine is probably the physiological thiol donor. The polypeptide is Metallothiol transferase FosB (Lysinibacillus sphaericus (strain C3-41)).